A 464-amino-acid polypeptide reads, in one-letter code: MKMKRARIVDLLSTPDFNRKVCVKGWVRTRRGNKNISFIELNDGSTVHGIQIVVNVVKLGEDSLKSITTGACIAINGLLVKSKGEGQKVEIQADEIEIYGIADPSVYPLQKKWHSLEFLREIAYLRPRTNTFGCILRIRHHLAYAIHKYFNKQGFFYFHTPIITSSDAEGAGSMFQITDLDIANCPKTKDGEVDYTRDFFGCSTNLTVSGQLEGELGALALGGIYTFGPIFRAEKSNTPRHLAEFWMIEPEIAFYDINDNMDLAEDFLKYIISYAMKYCKDDIEFLNNTYNNELIEHLNFVLSNRFVRLAYSEGIRILEQSNEEFEFPIYWGIDLQSEHERYLVEKYFKCPVIMTNYPKDIKSFYMKQNDDGRTVRGMDVLFPRIGEIIGGSERESDHQKLLKRIKELNMSMDNLWWYLDTRRFGTAPHSGFGLGFERLVLFVTGMQNIRDVIPFPRTPKNAEF.

The protein belongs to the class-II aminoacyl-tRNA synthetase family. In terms of assembly, homodimer.

The protein localises to the cytoplasm. It catalyses the reaction tRNA(Asn) + L-asparagine + ATP = L-asparaginyl-tRNA(Asn) + AMP + diphosphate + H(+). The chain is Asparagine--tRNA ligase from Azobacteroides pseudotrichonymphae genomovar. CFP2.